Consider the following 303-residue polypeptide: AP2-like ethylene-responsive transcription factor At1g79700 (303 aa).

The segment covering 1 to 10 (MAKVSGRSKK) has biased composition (basic residues). Residues 1–55 (MAKVSGRSKKTIVDDEISDKTASASESASIALTSKRKRKSPPRNAPLQRSSPYRG) form a disordered region. Residues 20–32 (KTASASESASIAL) are compositionally biased toward polar residues. 2 consecutive DNA-binding regions (AP2/ERF) follow at residues 52–118 (PYRG…LNFP) and 154–202 (KYRG…TNFD). A disordered region spans residues 212–259 (AADKADSDSKPIRSPSREPESSDDNKSPKSEEVIEPSTSPEVIPTRRS). The segment covering 214-243 (DKADSDSKPIRSPSREPESSDDNKSPKSEE) has biased composition (basic and acidic residues).

This sequence belongs to the AP2/ERF transcription factor family. AP2 subfamily.

It localises to the nucleus. In terms of biological role, probably acts as a transcriptional activator. Binds to the GCC-box pathogenesis-related promoter element. May be involved in the regulation of gene expression by stress factors and by components of stress signal transduction pathways. The sequence is that of AP2-like ethylene-responsive transcription factor At1g79700 from Arabidopsis thaliana (Mouse-ear cress).